The following is a 185-amino-acid chain: MIAAGDFRKGVTIEVDGQVFTVVDFMHVKPGKGAAFVRTKLKNVMTGAVIEKTFSPTEKFEEAVIERREMQYLYNDGELYYFMDTETYEQIPLNYDKVEDAIKYIKENMVVTVKFYKGEAFSVEPPTFVELEVVETEPGFRGDTATGGSKPATVETGAVIQVPLFINVGDKIRIDTRTGEYLERV.

Belongs to the elongation factor P family.

The protein resides in the cytoplasm. It participates in protein biosynthesis; polypeptide chain elongation. Functionally, involved in peptide bond synthesis. Stimulates efficient translation and peptide-bond synthesis on native or reconstituted 70S ribosomes in vitro. Probably functions indirectly by altering the affinity of the ribosome for aminoacyl-tRNA, thus increasing their reactivity as acceptors for peptidyl transferase. This is Elongation factor P from Thermoanaerobacter sp. (strain X514).